Here is a 1092-residue protein sequence, read N- to C-terminus: MEASAGLVAGSHNRNELVVIRRDGGGGGGVGGRRAAEAKAACQICGDDVGEGPDGEPFVACNECAFPVCRNCYDYERREGSQACPQCKTRFKRLKGCPRVAGDEEEDGVDDLEGEFGLDGREDDPQYIAESMLRANMSYGRGGDLQPFQPIPNVPLLTNGQMVDDIPPEQHALVPSYMGGGGGGGKRIHPLPFADPSVPVQPRSMDPSKDLAAYGYGSVAWKERMEGWKQKQERMQQLRSEGGGDWDGDGDADLPLMDEARQPLSRKVPISSSRINPYRMIIIIRLVVLGFFFHYRVMHPVNDAFALWLISVICEIWFAMSWILDQFPKWLPIERETYLDRLSLRFDKEGQPSQLAPVDFFVSTVDPSKEPPLVTANTVLSILSVDYPVEKVSCYVSDDGAAMLTFEALSETSEFAKKWVPFCKKFNIEPRAPEWYFQQKIDYLKDKVAASFVRERRAMKRDYEEFKVRINALVAKAQKVPEEGWTMQDGSPWPGNNVRDHPGMIQVFLGQSGGRDVEGNELPRLVYVSREKRPGYNHHKKAGAMNALVRVSAVLSNAPYLLNLDCDHYINNSKAIREAMCFMMDPLVGKKVCYVQFPQRFDGIDRHDRYANRNVVFFDINMKGLDGIQGPIYVGTGCVFRRQALYGYDAPKTKKPPSRTCNCWPKWCCCCCCGNRHTKKKTTKPKPEKKKRLFFKKAENQSPAYALGEIEEGAPGAETDKAGIVNQQKLEKKFGQSSVFVASTLLENGGTLKSASPASLLKEAIHVISCGYEDKTDWGKEIGWIYGSITEDILTGFKMHCHGWRSIYCIPKRPAFKGSAPLNLSDRLHQVLRWALGSVEIFFSKHCPLWYGYGGGLKFLERFSYINSIVYPWTSIPLLAYCTLPAICLLTGKFITPELTNVASLWFMSLFICIFVTGILEMRWSGVAIDDWWRNEQFWVIGGVSSHLFAVFQGLLKVLAGVDTSFTVTSKAGDDEEFSELYTFKWTTLLIPPTTLLLLNFIGVVAGVSNAINNGYESWGPLFGKLFFAFWVIVHLYPFLKGLVGRQNRTPTIVIVWSILLASIFSLLWVRIDPFLAKNNGPLLEECGLDCN.

At 1–280 (MEASAGLVAG…SSSRINPYRM (280 aa)) the chain is on the cytoplasmic side. Zn(2+) is bound by residues Cys-42, Cys-45, Cys-61, Cys-64, Cys-69, Cys-72, Cys-84, and Cys-87. The RING-type; degenerate zinc finger occupies 42-88 (CQICGDDVGEGPDGEPFVACNECAFPVCRNCYDYERREGSQACPQCK). The interval 100 to 123 (VAGDEEEDGVDDLEGEFGLDGRED) is disordered. Over residues 103 to 116 (DEEEDGVDDLEGEF) the composition is skewed to acidic residues. Residues 281–301 (IIIIRLVVLGFFFHYRVMHPV) traverse the membrane as a helical segment. The Extracellular portion of the chain corresponds to 302-303 (ND). The chain crosses the membrane as a helical span at residues 304-324 (AFALWLISVICEIWFAMSWIL). Topologically, residues 325–868 (DQFPKWLPIE…FLERFSYINS (544 aa)) are cytoplasmic. 4 residues coordinate UDP-alpha-D-glucose: Ser-363, Lys-369, Glu-370, and Asp-399. Residue Asp-399 is part of the active site. Positions 453–480 (VRERRAMKRDYEEFKVRINALVAKAQKV) form a coiled coil. Lys-540 lines the UDP-alpha-D-glucose pocket. Mn(2+) is bound by residues Lys-541 and Asp-565. The active site involves Asp-792. The chain crosses the membrane as a helical span at residues 869-889 (IVYPWTSIPLLAYCTLPAICL). Over 890–901 (LTGKFITPELTN) the chain is Extracellular. A helical transmembrane segment spans residues 902–922 (VASLWFMSLFICIFVTGILEM). At 923-937 (RWSGVAIDDWWRNEQ) the chain is on the cytoplasmic side. The chain crosses the membrane as a helical span at residues 938 to 958 (FWVIGGVSSHLFAVFQGLLKV). Residues 959-987 (LAGVDTSFTVTSKAGDDEEFSELYTFKWT) are Extracellular-facing. Residues 988-1008 (TLLIPPTTLLLLNFIGVVAGV) traverse the membrane as a helical segment. Topologically, residues 1009–1019 (SNAINNGYESW) are cytoplasmic. The helical transmembrane segment at 1020-1040 (GPLFGKLFFAFWVIVHLYPFL) threads the bilayer. Topologically, residues 1041–1049 (KGLVGRQNR) are extracellular. The chain crosses the membrane as a helical span at residues 1050 to 1070 (TPTIVIVWSILLASIFSLLWV). Over 1071 to 1092 (RIDPFLAKNNGPLLEECGLDCN) the chain is Cytoplasmic.

It belongs to the glycosyltransferase 2 family. Plant cellulose synthase subfamily. The cofactor is Mn(2+). It depends on Zn(2+) as a cofactor.

It is found in the cell membrane. The enzyme catalyses [(1-&gt;4)-beta-D-glucosyl](n) + UDP-alpha-D-glucose = [(1-&gt;4)-beta-D-glucosyl](n+1) + UDP + H(+). The protein operates within glycan metabolism; plant cellulose biosynthesis. Functionally, probable catalytic subunit of cellulose synthase terminal complexes ('rosettes'), required for beta-1,4-glucan microfibril crystallization, a major mechanism of the cell wall formation. The protein is Probable cellulose synthase A catalytic subunit 6 [UDP-forming] (CESA6) of Oryza sativa subsp. japonica (Rice).